A 254-amino-acid chain; its full sequence is Alcohol dehydrogenase 1 (254 aa).

10-33 (FVAGLGGIGFDTSREIVKKGPKNL) provides a ligand contact to NAD(+). Ser138 is a binding site for substrate. The active-site Proton acceptor is the Tyr151.

Belongs to the short-chain dehydrogenases/reductases (SDR) family. Homodimer.

It carries out the reaction a primary alcohol + NAD(+) = an aldehyde + NADH + H(+). The catalysed reaction is a secondary alcohol + NAD(+) = a ketone + NADH + H(+). The polypeptide is Alcohol dehydrogenase 1 (Adh1) (Drosophila mojavensis (Fruit fly)).